We begin with the raw amino-acid sequence, 848 residues long: DNA mismatch repair protein MutS (848 aa).

610–617 (GPNMGGKS) contributes to the ATP binding site.

This sequence belongs to the DNA mismatch repair MutS family.

In terms of biological role, this protein is involved in the repair of mismatches in DNA. It is possible that it carries out the mismatch recognition step. This protein has a weak ATPase activity. The chain is DNA mismatch repair protein MutS from Francisella philomiragia subsp. philomiragia (strain ATCC 25017 / CCUG 19701 / FSC 153 / O#319-036).